A 147-amino-acid chain; its full sequence is 3-hydroxyacyl-[acyl-carrier-protein] dehydratase FabZ (147 aa).

Residue H49 is part of the active site.

It belongs to the thioester dehydratase family. FabZ subfamily.

It localises to the cytoplasm. It catalyses the reaction a (3R)-hydroxyacyl-[ACP] = a (2E)-enoyl-[ACP] + H2O. Functionally, involved in unsaturated fatty acids biosynthesis. Catalyzes the dehydration of short chain beta-hydroxyacyl-ACPs and long chain saturated and unsaturated beta-hydroxyacyl-ACPs. The protein is 3-hydroxyacyl-[acyl-carrier-protein] dehydratase FabZ of Syntrophotalea carbinolica (strain DSM 2380 / NBRC 103641 / GraBd1) (Pelobacter carbinolicus).